We begin with the raw amino-acid sequence, 208 residues long: Cysteine-rich protein 2 (208 aa).

Residues 5–57 (CPKCDKTVYFAEKVSSLGKDWHKFCLKCERCNKTLTPGGHAEHDGKPFCHKPC) enclose the LIM zinc-binding 1 domain. N6-acetyllysine is present on K23. S104 carries the post-translational modification Phosphoserine. The region spanning 126–178 (CPRCNKRVYFAEKVTSLGKDWHRPCLRCERCSKTLTPGGHAEHDGQPYCHKPC) is the LIM zinc-binding 2 domain. N6-acetyllysine is present on residues K138 and K144.

Interacts with TGFB1I1.

This chain is Cysteine-rich protein 2 (Crip2), found in Mus musculus (Mouse).